The chain runs to 190 residues: ADP-ribosylation factor-like protein 6 (190 aa).

Glycine 2 is lipidated: N-myristoyl glycine. GTP-binding positions include glycine 24–threonine 31, threonine 50, aspartate 69–glutamine 73, glycine 72, asparagine 130–aspartate 133, and alanine 164. Mg(2+) contacts are provided by threonine 31 and threonine 50.

This sequence belongs to the small GTPase superfamily. Arf family.

The protein localises to the cytoplasm. The sequence is that of ADP-ribosylation factor-like protein 6 from Caenorhabditis briggsae.